Here is a 395-residue protein sequence, read N- to C-terminus: L-lactate dehydrogenase (395 aa).

Positions 1–380 constitute an FMN hydroxy acid dehydrogenase domain; that stretch reads MIISAASDYR…SKDSLVQELS (380 aa). Position 24 (Tyr-24) interacts with substrate. FMN contacts are provided by Ser-106 and Gln-127. Tyr-129 serves as a coordination point for substrate. Residue Thr-155 coordinates FMN. Residue Arg-164 coordinates substrate. FMN is bound at residue Lys-251. Catalysis depends on His-275, which acts as the Proton acceptor. Residue Arg-278 coordinates substrate. FMN is bound at residue 306–330; the sequence is DSGIRNGLDVVRMIALGADSVLLGR.

This sequence belongs to the FMN-dependent alpha-hydroxy acid dehydrogenase family. FMN is required as a cofactor.

The protein resides in the cell inner membrane. It catalyses the reaction (S)-lactate + A = pyruvate + AH2. Its function is as follows. Catalyzes the conversion of L-lactate to pyruvate. Is coupled to the respiratory chain. This Enterobacter sp. (strain 638) protein is L-lactate dehydrogenase.